Consider the following 461-residue polypeptide: Argininosuccinate lyase (461 aa).

The protein belongs to the lyase 1 family. Argininosuccinate lyase subfamily.

The protein localises to the cytoplasm. The enzyme catalyses 2-(N(omega)-L-arginino)succinate = fumarate + L-arginine. The protein operates within amino-acid biosynthesis; L-arginine biosynthesis; L-arginine from L-ornithine and carbamoyl phosphate: step 3/3. This Limosilactobacillus reuteri subsp. reuteri (strain JCM 1112) (Lactobacillus reuteri) protein is Argininosuccinate lyase.